Consider the following 320-residue polypeptide: Aminoacyl tRNA synthase complex-interacting multifunctional protein 2 (320 aa).

Residues H31–L52 are disordered. Position 36 is a phosphoserine (S36). Positions T82–P162 are interaction with PRKN. An interaction with TP53 region spans residues P162–H225. The region spanning L220 to Q317 is the GST C-terminal domain.

As to quaternary structure, part of the multisynthetase complex (MSC), a multisubunit complex that groups tRNA ligases for Arg (RARS1), Asp (DARS1), Gln (QARS1), Ile (IARS1), Leu (LARS1), Lys (KARS1), Met (MARS1) the bifunctional ligase for Glu and Pro (EPRS1) and the auxiliary subunits AIMP1/p43, AIMP2/p38 and EEF1E1/p18. Interacts (via N-terminus) with KARS1. Interacts with EPRS1. Forms a linear complex that contains MARS1, EEF1E1, EPRS1 and AIMP2 that is at the core of the multisubunit complex. Binds FUBP1 (via C-terminus). Interacts in both its unphosphorylated and phosphorylated forms with p53/TP53 (via N-terminus) in the nucleus following UV irradiation. Interacts (via N-terminus) with PRKN/parkin (via first RING-type domain). Interacts with TARS3. Post-translationally, phosphorylated on serine residues in response to UV irradiation. Ubiquitinated by PRKN, leading to its degradation by the proteasome.

The protein resides in the cytoplasm. The protein localises to the cytosol. It is found in the nucleus. In terms of biological role, required for assembly and stability of the aminoacyl-tRNA synthase complex. Mediates ubiquitination and degradation of FUBP1, a transcriptional activator of MYC, leading to MYC down-regulation which is required for aveolar type II cell differentiation. Blocks MDM2-mediated ubiquitination and degradation of p53/TP53. Functions as a proapoptotic factor. The polypeptide is Aminoacyl tRNA synthase complex-interacting multifunctional protein 2 (AIMP2) (Cricetulus griseus (Chinese hamster)).